The primary structure comprises 25 residues: Toxin Tpa3 (25 aa).

It belongs to the non-disulfide-bridged peptide (NDBP) superfamily. As to expression, expressed by the venom gland.

The protein localises to the secreted. Unknown. Is not toxic to mammals. The polypeptide is Toxin Tpa3 (Tityus pachyurus (Colombian scorpion)).